The primary structure comprises 488 residues: Zinc metalloproteinase-disintegrin agkistin (488 aa).

The first 20 residues, 1 to 20, serve as a signal peptide directing secretion; it reads MIQVLLVTICLAVFPYQGSS. Positions 21 to 195 are excised as a propeptide; that stretch reads IILESGNVND…NFPPDGRIEF (175 aa). The region spanning 198 to 394 is the Peptidase M12B domain; it reads RYIELVIVAD…NPLASYCLYN (197 aa). E201 is a binding site for Ca(2+). A glycan (N-linked (GlcNAc...) asparagine) is linked at N258. D285 lines the Ca(2+) pocket. 3 disulfide bridges follow: C309–C391, C349–C373, and C351–C356. A Zn(2+)-binding site is contributed by H334. E335 is an active-site residue. Zn(2+) is bound by residues H338 and H344. Positions 391, 394, 406, 409, 413, 416, and 419 each coordinate Ca(2+). The Disintegrin domain occupies 404–488; sequence PPVCGNYYLE…AGCPRNPSHA (85 aa). 7 disulfides stabilise this stretch: C407/C426, C418/C436, C420/C431, C430/C453, C444/C450, C449/C474, and C462/C481. Residues 466–468 carry the Cell attachment site motif; the sequence is RGD.

Belongs to the venom metalloproteinase (M12B) family. P-II subfamily. P-IIb sub-subfamily. Monomer. Requires Zn(2+) as cofactor. Expressed by the venom gland.

Its subcellular location is the secreted. Its function is as follows. Inhibits ADP-induced human platelet aggregation, inhibits bovine aortic endothelial cells (BAEC) migration, has anti-angiogenic activity and induces BAEC and human micro-vascular endothelial cell (HMEC) apoptosis. The metalloproteinase domain may act in hemorrhage. This Gloydius halys (Chinese water mocassin) protein is Zinc metalloproteinase-disintegrin agkistin.